A 139-amino-acid chain; its full sequence is Holo-[acyl-carrier-protein] synthase (139 aa).

Mg(2+) is bound by residues aspartate 8 and glutamate 61.

The protein belongs to the P-Pant transferase superfamily. AcpS family. Mg(2+) is required as a cofactor.

The protein localises to the cytoplasm. It carries out the reaction apo-[ACP] + CoA = holo-[ACP] + adenosine 3',5'-bisphosphate + H(+). Its function is as follows. Transfers the 4'-phosphopantetheine moiety from coenzyme A to a Ser of acyl-carrier-protein. In Nitrobacter hamburgensis (strain DSM 10229 / NCIMB 13809 / X14), this protein is Holo-[acyl-carrier-protein] synthase.